A 309-amino-acid chain; its full sequence is Probable ABC transporter permease protein y4oQ (309 aa).

Helical transmembrane passes span 25–45, 89–109, 123–143, 174–194, 221–241, 246–266, and 278–298; these read VVWF…VPLV, LIYA…FAVL, LMLI…KLLY, VIIV…LAGL, LPHL…GVMA, IFLL…VYAY, and TTAI…PLIW. Residues 85 to 296 form the ABC transmembrane type-1 domain; sequence IRVTLIYAVV…VFVLAISAPL (212 aa).

This sequence belongs to the binding-protein-dependent transport system permease family. MalFG subfamily.

It localises to the cell inner membrane. Functionally, probably part of the binding-protein-dependent transport system y4oPQRS. This system probably transports a sugar-like molecule. Probably responsible for the translocation of the substrate across the membrane. The chain is Probable ABC transporter permease protein y4oQ from Sinorhizobium fredii (strain NBRC 101917 / NGR234).